Reading from the N-terminus, the 210-residue chain is MNKVLVSLLLTLGITGMAHAAGDAEAGQGKVAVCGACHGVDGNSPAPNFPKLAGQGERYLLKQLQDIKAGSTPGAPEGVGRKVLEMTGMLDPLSDQDLEDIAAYFSSQKGSVGYADPALAKQGEKLFRGGKLDQGMPACTGCHAPNGVGNDLAGFPKLGGQHAAYTAKQLTDFREGNRTNDGDTMIMRGVAAKLSNKDIEALSSYIQGLH.

The N-terminal stretch at 1 to 20 (MNKVLVSLLLTLGITGMAHA) is a signal peptide. Residues Cys-34, Cys-37, His-38, Met-86, Cys-139, Cys-142, His-143, and Met-187 each contribute to the heme c site.

In terms of processing, binds 2 heme c groups covalently per subunit.

Its subcellular location is the periplasm. Functionally, diheme, high potential cytochrome c believed to be an intermediate electron donor to terminal oxidation systems. The protein is Cytochrome c4 (cc4) of Stutzerimonas stutzeri (Pseudomonas stutzeri).